A 458-amino-acid chain; its full sequence is Methionine aminopeptidase 2-2 (458 aa).

The span at 1–14 (MGSKTPERDGHKGQ) shows a compositional bias: basic and acidic residues. The disordered stretch occupies residues 1 to 93 (MGSKTPERDG…QSSPPRVPLS (93 aa)). Positions 67 to 82 (QKKKRKSKKKGKKKAA) are enriched in basic residues. Position 209 (His209) interacts with substrate. Positions 230, 241, and 310 each coordinate a divalent metal cation. A substrate-binding site is contributed by His318. A divalent metal cation is bound by residues Glu343 and Glu439.

Belongs to the peptidase M24A family. Methionine aminopeptidase eukaryotic type 2 subfamily. Requires Co(2+) as cofactor. It depends on Zn(2+) as a cofactor. Mn(2+) serves as cofactor. Fe(2+) is required as a cofactor.

Its subcellular location is the cytoplasm. It carries out the reaction Release of N-terminal amino acids, preferentially methionine, from peptides and arylamides.. In terms of biological role, cotranslationally removes the N-terminal methionine from nascent proteins. The N-terminal methionine is often cleaved when the second residue in the primary sequence is small and uncharged (Met-Ala-, Cys, Gly, Pro, Ser, Thr, or Val). The sequence is that of Methionine aminopeptidase 2-2 from Emericella nidulans (strain FGSC A4 / ATCC 38163 / CBS 112.46 / NRRL 194 / M139) (Aspergillus nidulans).